Here is a 289-residue protein sequence, read N- to C-terminus: ATP synthase gamma chain (289 aa).

This sequence belongs to the ATPase gamma chain family. As to quaternary structure, F-type ATPases have 2 components, CF(1) - the catalytic core - and CF(0) - the membrane proton channel. CF(1) has five subunits: alpha(3), beta(3), gamma(1), delta(1), epsilon(1). CF(0) has three main subunits: a, b and c.

Its subcellular location is the cell inner membrane. Its function is as follows. Produces ATP from ADP in the presence of a proton gradient across the membrane. The gamma chain is believed to be important in regulating ATPase activity and the flow of protons through the CF(0) complex. This Cereibacter sphaeroides (strain ATCC 17029 / ATH 2.4.9) (Rhodobacter sphaeroides) protein is ATP synthase gamma chain.